Here is a 262-residue protein sequence, read N- to C-terminus: Phosphate import ATP-binding protein PstB (262 aa).

Residues 16–257 (IDVRNLNFYY…PHRKETEDYI (242 aa)) enclose the ABC transporter domain. 48–55 (GPSGCGKS) provides a ligand contact to ATP.

This sequence belongs to the ABC transporter superfamily. Phosphate importer (TC 3.A.1.7) family. The complex is composed of two ATP-binding proteins (PstB), two transmembrane proteins (PstC and PstA) and a solute-binding protein (PstS).

Its subcellular location is the cell inner membrane. The enzyme catalyses phosphate(out) + ATP + H2O = ADP + 2 phosphate(in) + H(+). In terms of biological role, part of the ABC transporter complex PstSACB involved in phosphate import. Responsible for energy coupling to the transport system. The polypeptide is Phosphate import ATP-binding protein PstB (Cupriavidus pinatubonensis (strain JMP 134 / LMG 1197) (Cupriavidus necator (strain JMP 134))).